Here is a 486-residue protein sequence, read N- to C-terminus: MPPTSGTSRSVALVTLGCARNDVDSEELAGRLADAGWTLVDDADGADVAVVNTCGFVEQAKKDSIDTVLAAADLKEAGRTKAVVAVGCMAERYGKDLAESLPEADAILGFDSYGDLSSHLEAILHGEKPQSHVPRDRRTLLPLAPAERQAARPVIAEPDLPEGLAPASGPRVVRRRLGSGPWAPVKIAAGCDRRCTFCAIPAFRGSFVSRPAEEVLAETRWLAEQGVKEVFLVSENTTSYGKDLGDLRALEALLPHVAAVEGIERVRVSYLQPAEVRPGLLDALTSTPGVVPYFDLSFQHSSPAVLRRMRRFGGTEPFLALLEQVRERHPQAGIRSNVIVGFPGETEADVDELCSFLERARLDVVGVFGYSDEDGTEAETLDGKLPDEVVAARVDRVTRLVEELVTQRAEERLGEVVEVLVESVVDEDGDPHVVGRAAHQGPDVDGETELDLPAGFVVHVGDLVTARVTGVAGADLLAEPLVRATV.

One can recognise an MTTase N-terminal domain in the interval Arg9 to His125. Residues Cys18, Cys54, Cys88, Cys191, Cys195, and Cys198 each coordinate [4Fe-4S] cluster. The Radical SAM core domain maps to Leu177–Arg408. The 73-residue stretch at Glu410–Val482 folds into the TRAM domain.

This sequence belongs to the methylthiotransferase family. RimO subfamily. The cofactor is [4Fe-4S] cluster.

The protein resides in the cytoplasm. It carries out the reaction L-aspartate(89)-[ribosomal protein uS12]-hydrogen + (sulfur carrier)-SH + AH2 + 2 S-adenosyl-L-methionine = 3-methylsulfanyl-L-aspartate(89)-[ribosomal protein uS12]-hydrogen + (sulfur carrier)-H + 5'-deoxyadenosine + L-methionine + A + S-adenosyl-L-homocysteine + 2 H(+). In terms of biological role, catalyzes the methylthiolation of an aspartic acid residue of ribosomal protein uS12. This is Ribosomal protein uS12 methylthiotransferase RimO from Kineococcus radiotolerans (strain ATCC BAA-149 / DSM 14245 / SRS30216).